Reading from the N-terminus, the 291-residue chain is 33 kDa chaperonin (291 aa).

2 cysteine pairs are disulfide-bonded: Cys-237/Cys-239 and Cys-270/Cys-273.

This sequence belongs to the HSP33 family. In terms of processing, under oxidizing conditions two disulfide bonds are formed involving the reactive cysteines. Under reducing conditions zinc is bound to the reactive cysteines and the protein is inactive.

Its subcellular location is the cytoplasm. In terms of biological role, redox regulated molecular chaperone. Protects both thermally unfolding and oxidatively damaged proteins from irreversible aggregation. Plays an important role in the bacterial defense system toward oxidative stress. The sequence is that of 33 kDa chaperonin from Bacillus mycoides (strain KBAB4) (Bacillus weihenstephanensis).